Reading from the N-terminus, the 417-residue chain is Gamma-glutamyl phosphate reductase (417 aa).

It belongs to the gamma-glutamyl phosphate reductase family.

It is found in the cytoplasm. It carries out the reaction L-glutamate 5-semialdehyde + phosphate + NADP(+) = L-glutamyl 5-phosphate + NADPH + H(+). It functions in the pathway amino-acid biosynthesis; L-proline biosynthesis; L-glutamate 5-semialdehyde from L-glutamate: step 2/2. Functionally, catalyzes the NADPH-dependent reduction of L-glutamate 5-phosphate into L-glutamate 5-semialdehyde and phosphate. The product spontaneously undergoes cyclization to form 1-pyrroline-5-carboxylate. This chain is Gamma-glutamyl phosphate reductase, found in Escherichia coli (strain SMS-3-5 / SECEC).